The sequence spans 69 residues: UPF0337 protein YjbJ (69 aa).

It belongs to the UPF0337 (CsbD) family.

This is UPF0337 protein YjbJ (yjbJ) from Escherichia coli O6:H1 (strain CFT073 / ATCC 700928 / UPEC).